The sequence spans 343 residues: Heat-inducible transcription repressor HrcA (343 aa).

It belongs to the HrcA family.

In terms of biological role, negative regulator of class I heat shock genes (grpE-dnaK-dnaJ and groELS operons). Prevents heat-shock induction of these operons. This is Heat-inducible transcription repressor HrcA from Thermobifida fusca (strain YX).